The primary structure comprises 330 residues: Sulfate/thiosulfate import ATP-binding protein CysA (330 aa).

The region spanning 3–237 (IEIRNINKQF…PASEFVYHFL (235 aa)) is the ABC transporter domain. Residue 35–42 (GPSGCGKT) participates in ATP binding.

This sequence belongs to the ABC transporter superfamily. Sulfate/tungstate importer (TC 3.A.1.6) family. The complex is composed of two ATP-binding proteins (CysA), two transmembrane proteins (CysT and CysW) and a solute-binding protein (CysP).

The protein resides in the cell inner membrane. The enzyme catalyses sulfate(out) + ATP + H2O = sulfate(in) + ADP + phosphate + H(+). It catalyses the reaction thiosulfate(out) + ATP + H2O = thiosulfate(in) + ADP + phosphate + H(+). Functionally, part of the ABC transporter complex CysAWTP involved in sulfate/thiosulfate import. Responsible for energy coupling to the transport system. This is Sulfate/thiosulfate import ATP-binding protein CysA from Pectobacterium atrosepticum (strain SCRI 1043 / ATCC BAA-672) (Erwinia carotovora subsp. atroseptica).